A 201-amino-acid polypeptide reads, in one-letter code: Protein GrpE (201 aa).

A compositionally biased stretch (polar residues) spans 1–11 (MTDSTNNQGTS). Positions 1–40 (MTDSTNNQGTSGRPDDDHTTEEVASVFNDPGAQAPAGEPD) are disordered.

Belongs to the GrpE family. As to quaternary structure, homodimer.

The protein localises to the cytoplasm. Its function is as follows. Participates actively in the response to hyperosmotic and heat shock by preventing the aggregation of stress-denatured proteins, in association with DnaK and GrpE. It is the nucleotide exchange factor for DnaK and may function as a thermosensor. Unfolded proteins bind initially to DnaJ; upon interaction with the DnaJ-bound protein, DnaK hydrolyzes its bound ATP, resulting in the formation of a stable complex. GrpE releases ADP from DnaK; ATP binding to DnaK triggers the release of the substrate protein, thus completing the reaction cycle. Several rounds of ATP-dependent interactions between DnaJ, DnaK and GrpE are required for fully efficient folding. The polypeptide is Protein GrpE (Beijerinckia indica subsp. indica (strain ATCC 9039 / DSM 1715 / NCIMB 8712)).